Consider the following 328-residue polypeptide: Acyl-CoA wax alcohol acyltransferase 1 (328 aa).

The next 2 helical transmembrane spans lie at serine 12–leucine 32 and isoleucine 34–leucine 53.

The protein belongs to the diacylglycerol acyltransferase family.

It localises to the endoplasmic reticulum membrane. The catalysed reaction is a long chain fatty alcohol + a fatty acyl-CoA = a wax ester + CoA. It carries out the reaction 1,2-di-(9Z-octadecenoyl)-sn-glycerol + (9Z)-octadecenoyl-CoA = 1,2,3-tri-(9Z-octadecenoyl)-glycerol + CoA. The enzyme catalyses hexadecan-1-ol + (9Z)-octadecenoyl-CoA = hexadecanyl (9Z)-octadecenoate + CoA. It catalyses the reaction decan-1-ol + (9Z)-octadecenoyl-CoA = 1-O-decyl-(9Z)-octadecenoate + CoA. The catalysed reaction is (9Z)-hexadecen-1-ol + (9Z)-octadecenoyl-CoA = 1-O-(9Z)-hexadecenyl (9Z)-octadecenoate + CoA. It carries out the reaction octadecan-1-ol + (9Z)-octadecenoyl-CoA = 1-O-octadecyl (9Z)-octadecenoate + CoA. The enzyme catalyses (9Z)-octadecen-1-ol + (9Z)-octadecenoyl-CoA = 1-O-(9Z)-octadecenyl (9Z)-octadecenoate + CoA. It catalyses the reaction hexadecan-1-ol + hexadecanoyl-CoA = hexadecanyl hexadecanoate + CoA. The catalysed reaction is hexadecan-1-ol + (9Z)-hexadecenoyl-CoA = 1-O-hexadecyl (9Z)-hexadecenoate + CoA. It carries out the reaction hexadecan-1-ol + octadecanoyl-CoA = hexadecanyl octadecanoate + CoA. The enzyme catalyses eicosan-1-ol + (9Z)-octadecenoyl-CoA = 1-O-eicosanyl (9Z)-octadecenoate + CoA. Its function is as follows. Acyltransferase that catalyzes the formation of ester bonds between fatty alcohols and fatty acyl-CoAs to form wax monoesters. Shows a strong preference for decyl alcohol (C10), with less activity towards C16 and C18 alcohols. Shows a strong preference for saturated acyl-CoAs. The chain is Acyl-CoA wax alcohol acyltransferase 1 (Awat1) from Mus musculus (Mouse).